We begin with the raw amino-acid sequence, 835 residues long: Prickle-like protein 1-A (835 aa).

Residues 14–122 (FGCQRSSTSD…NIKMLSRAVM (109 aa)) enclose the PET domain. LIM zinc-binding domains lie at 124 to 188 (ATCE…ELLK), 189 to 249 (PRCS…HYAE), and 250 to 313 (YCES…EDVH). 4 disordered regions span residues 312-346 (VHAS…ADQC), 426-455 (LFQQ…QRNN), 603-706 (CQEK…RKRS), and 769-835 (CSSS…CIIS). 3 stretches are compositionally biased toward basic and acidic residues: residues 432–453 (EDNR…DLQR), 603–614 (CQEKPPPEEKPM), and 646–655 (EIRRPPMSER). Basic residues-rich tracts occupy residues 669-683 (RPHH…KSRK) and 819-835 (SKSK…CIIS). Cysteine methyl ester is present on Cys-832. Cys-832 carries S-farnesyl cysteine lipidation. Positions 833-835 (IIS) are cleaved as a propeptide — removed in mature form.

This sequence belongs to the prickle / espinas / testin family. In terms of assembly, interacts with dvl2/dsh and mapk8/jnk1. As to expression, expressed in the dorsal marginal zone of early gastrulae (stage 10). As gastrulation proceeds, expression expands to include the lateral and ventral marginal zones, excluding the few rows of cells above the blastopore lip. Expression moves dorsally with gastrulation cell movements, and by the end of gastrulation expression is seen in dorsal mesoderm and posterior but not anterior neural ectoderm. Expression becomes down-regulated in mesoderm but remains strong in posterior ectoderm through the neurula stages. During tailbud stages, expressed in the pronephric duct, tailbud, tailtip and forming somites. In the most posterior regions, expressed in notochord and in the floorplate of the neural tube with weak expression in the roofplate. At stage 30, expressed in a complex pattern in the head including strong expression in the lens and otic vesicle.

Its subcellular location is the cell membrane. Its function is as follows. Acts in a planar cell polarity (PCP) complex; polarization along the apical/basal axis of epithelial cells. Regulates the polarized assembly of fibronectrin on the surface of the mesoderm during gastrulation. Essential for gastrulation cell movements, cooperating with dvl2/dsh to activate jnk. Acts together with tes to control axial elongation. The polypeptide is Prickle-like protein 1-A (prickle1-a) (Xenopus laevis (African clawed frog)).